We begin with the raw amino-acid sequence, 183 residues long: RNA 2',3'-cyclic phosphodiesterase (183 aa).

The active-site Proton donor is the His-44. 2 short sequence motifs (HXTX) span residues 44 to 47 (HITL) and 130 to 133 (HMTL). His-130 (proton acceptor) is an active-site residue.

This sequence belongs to the 2H phosphoesterase superfamily. ThpR family.

It carries out the reaction a 3'-end 2',3'-cyclophospho-ribonucleotide-RNA + H2O = a 3'-end 2'-phospho-ribonucleotide-RNA + H(+). In terms of biological role, hydrolyzes RNA 2',3'-cyclic phosphodiester to an RNA 2'-phosphomonoester. The sequence is that of RNA 2',3'-cyclic phosphodiesterase (ytlP) from Bacillus subtilis (strain 168).